Reading from the N-terminus, the 379-residue chain is UDP-N-acetylglucosamine--N-acetylmuramyl-(pentapeptide) pyrophosphoryl-undecaprenol N-acetylglucosamine transferase (379 aa).

Residues 17 to 19, N128, R169, S197, and Q298 contribute to the UDP-N-acetyl-alpha-D-glucosamine site; that span reads TGG.

The protein belongs to the glycosyltransferase 28 family. MurG subfamily.

It is found in the cell inner membrane. The catalysed reaction is di-trans,octa-cis-undecaprenyl diphospho-N-acetyl-alpha-D-muramoyl-L-alanyl-D-glutamyl-meso-2,6-diaminopimeloyl-D-alanyl-D-alanine + UDP-N-acetyl-alpha-D-glucosamine = di-trans,octa-cis-undecaprenyl diphospho-[N-acetyl-alpha-D-glucosaminyl-(1-&gt;4)]-N-acetyl-alpha-D-muramoyl-L-alanyl-D-glutamyl-meso-2,6-diaminopimeloyl-D-alanyl-D-alanine + UDP + H(+). Its pathway is cell wall biogenesis; peptidoglycan biosynthesis. Cell wall formation. Catalyzes the transfer of a GlcNAc subunit on undecaprenyl-pyrophosphoryl-MurNAc-pentapeptide (lipid intermediate I) to form undecaprenyl-pyrophosphoryl-MurNAc-(pentapeptide)GlcNAc (lipid intermediate II). This is UDP-N-acetylglucosamine--N-acetylmuramyl-(pentapeptide) pyrophosphoryl-undecaprenol N-acetylglucosamine transferase from Brucella abortus (strain S19).